A 117-amino-acid chain; its full sequence is Hemerythrin subunit alpha (117 aa).

Residues H24, H53, E57, H72, H76, H105, and D110 each contribute to the Fe cation site.

It belongs to the hemerythrin family. As to quaternary structure, octamer composed of two types of chains: alpha and beta.

In terms of biological role, hemerythrin is a respiratory protein in blood cells of certain marine worms. The oxygen-binding site in each chain contains two iron atoms. This is Hemerythrin subunit alpha from Lingula anatina (Brachiopod).